We begin with the raw amino-acid sequence, 346 residues long: Uroporphyrinogen decarboxylase (346 aa).

Residues 26–30, Phe45, Asp76, Tyr153, Ser208, and His323 contribute to the substrate site; that span reads RQAGR.

It belongs to the uroporphyrinogen decarboxylase family. As to quaternary structure, homodimer.

It localises to the cytoplasm. The enzyme catalyses uroporphyrinogen III + 4 H(+) = coproporphyrinogen III + 4 CO2. Its pathway is porphyrin-containing compound metabolism; protoporphyrin-IX biosynthesis; coproporphyrinogen-III from 5-aminolevulinate: step 4/4. Catalyzes the decarboxylation of four acetate groups of uroporphyrinogen-III to yield coproporphyrinogen-III. In Prochlorococcus marinus subsp. pastoris (strain CCMP1986 / NIES-2087 / MED4), this protein is Uroporphyrinogen decarboxylase.